The chain runs to 679 residues: Glycine--tRNA ligase beta subunit (679 aa).

The protein belongs to the class-II aminoacyl-tRNA synthetase family. Tetramer of two alpha and two beta subunits.

The protein resides in the cytoplasm. The catalysed reaction is tRNA(Gly) + glycine + ATP = glycyl-tRNA(Gly) + AMP + diphosphate. The chain is Glycine--tRNA ligase beta subunit from Streptococcus pyogenes serotype M2 (strain MGAS10270).